The sequence spans 692 residues: Follicle-stimulating hormone receptor (692 aa).

Positions 1–17 (MALLLVSLLAFLGTGSG) are cleaved as a signal peptide. 2 disulfides stabilise this stretch: cysteine 18–cysteine 25 and cysteine 23–cysteine 32. Residues 18 to 46 (CHHWLCHCSNRVFLCQDSKVTEIPTDLPR) form the LRRNT domain. The Extracellular segment spans residues 18 to 365 (CHHWLCHCSN…EDIMGYNILR (348 aa)). LRR repeat units lie at residues 49-72 (IELRFVLTKLRVIPKGSFAGFGDL), 73-97 (EKIEISQNDVLEVIEADVFSNLPKL), 98-118 (HEIRIEKANNLLYINPEAFQN), 119-143 (LPSLRYLLISNTGIKHLPAVHKIQS), 144-169 (LQKVLLDIQDNINIHIVARNSFMGLS), 170-192 (FESVILWLSKNGIEEIHNCAFNG), 193-216 (TQLDELNLSDNNNLEELPNDVFQG), 217-240 (ASGPVILDISRTKVHSLPNHGLEN), and 241-259 (LKKLRARSTYRLKKLPNLD). N-linked (GlcNAc...) asparagine glycans are attached at residues asparagine 191 and asparagine 199. Intrachain disulfides connect cysteine 275/cysteine 345, cysteine 276/cysteine 292, cysteine 276/cysteine 355, and cysteine 292/cysteine 337. The N-linked (GlcNAc...) asparagine glycan is linked to asparagine 293. The residue at position 334 (tyrosine 334) is a Sulfotyrosine. The helical transmembrane segment at 366-386 (VLIWFISILAITGNTTVLVVL) threads the bilayer. Topologically, residues 387–397 (TTSQYKLTVPR) are cytoplasmic. Residues 398–420 (FLMCNLAFADLCIGIYLLLIASV) traverse the membrane as a helical segment. At 421–442 (DIHTKSQYHNYAIDWQTGAGCD) the chain is on the extracellular side. A disulfide bridge links cysteine 441 with cysteine 516. Residues 443–464 (AAGFFTVFASELSVYTLTAITL) form a helical membrane-spanning segment. At 465-484 (ERWHTITHAMQLECKVQLRH) the chain is on the cytoplasmic side. The helical transmembrane segment at 485–507 (AASVMVLGWTFAFAAALFPIFGI) threads the bilayer. The Extracellular portion of the chain corresponds to 508–527 (SSYMKVSICLPMDIDSPLSQ). Residues 528–549 (LYVMALLVLNVLAFVVICGCYT) traverse the membrane as a helical segment. Topologically, residues 550–572 (HIYLTVRNPTIVSSSSDTKIAKR) are cytoplasmic. The helical transmembrane segment at 573–596 (MATLIFTDFLCMAPISFFAISASL) threads the bilayer. The Extracellular portion of the chain corresponds to 597–607 (KVPLITVSKAK). Residues 608–629 (ILLVLFYPINSCANPFLYAIFT) form a helical membrane-spanning segment. At 630–692 (KNFRRDFFIL…LVPLNHSSQN (63 aa)) the chain is on the cytoplasmic side.

This sequence belongs to the G-protein coupled receptor 1 family. FSH/LSH/TSH subfamily. As to quaternary structure, homotrimer. Functions as a homotrimer binding the FSH hormone heterodimer composed of CGA and FSHB. Interacts with ARRB2. Interacts with APPL2; interaction is independent of follicle stimulating hormone stimulation. N-glycosylated; indirectly required for FSH-binding, possibly via a conformational change that allows high affinity binding of hormone. Post-translationally, sulfated. Sertoli cells and ovarian granulosa cells.

It localises to the cell membrane. Its function is as follows. G protein-coupled receptor for follitropin, the follicle-stimulating hormone. Through cAMP production activates the downstream PI3K-AKT and ERK1/ERK2 signaling pathways. In Rattus norvegicus (Rat), this protein is Follicle-stimulating hormone receptor (Fshr).